A 1063-amino-acid chain; its full sequence is Endo-1,4-beta-xylanase 2 (1063 aa).

CBM-cenC domains are found at residues 5–146, 183–313, 348–482, and 517–662; these read NIVM…GPAP, NIIK…LEGP, NHIF…IEGP, and NIVS…QGPS. Positions 711 to 1006 constitute a GH10 domain; that stretch reads SGATVKIRQT…NEAGKRFLEI (296 aa). The active-site Proton donor is the Glu-840. The active-site Nucleophile is the Glu-941.

The protein belongs to the glycosyl hydrolase 10 (cellulase F) family.

It carries out the reaction Endohydrolysis of (1-&gt;4)-beta-D-xylosidic linkages in xylans.. It participates in glycan degradation; xylan degradation. Its function is as follows. Binds to and hydrolyzes insoluble and soluble xylan substrates. The chain is Endo-1,4-beta-xylanase 2 from Arabidopsis thaliana (Mouse-ear cress).